Here is a 329-residue protein sequence, read N- to C-terminus: Biotin synthase (329 aa).

Residues 48–278 enclose the Radical SAM core domain; sequence FLGTGVDLCS…DRKIAVCGGR (231 aa). The [4Fe-4S] cluster site is built by C66, C70, and C73. [2Fe-2S] cluster is bound by residues S143 and C203.

Belongs to the radical SAM superfamily. Biotin synthase family. In terms of assembly, homodimer. It depends on [4Fe-4S] cluster as a cofactor. [2Fe-2S] cluster serves as cofactor.

It carries out the reaction (4R,5S)-dethiobiotin + (sulfur carrier)-SH + 2 reduced [2Fe-2S]-[ferredoxin] + 2 S-adenosyl-L-methionine = (sulfur carrier)-H + biotin + 2 5'-deoxyadenosine + 2 L-methionine + 2 oxidized [2Fe-2S]-[ferredoxin]. It participates in cofactor biosynthesis; biotin biosynthesis; biotin from 7,8-diaminononanoate: step 2/2. In terms of biological role, catalyzes the conversion of dethiobiotin (DTB) to biotin by the insertion of a sulfur atom into dethiobiotin via a radical-based mechanism. The protein is Biotin synthase of Geobacter sulfurreducens (strain ATCC 51573 / DSM 12127 / PCA).